A 150-amino-acid chain; its full sequence is Large ribosomal subunit protein bL9 (150 aa).

It belongs to the bacterial ribosomal protein bL9 family.

Functionally, binds to the 23S rRNA. This chain is Large ribosomal subunit protein bL9, found in Hydrogenovibrio crunogenus (strain DSM 25203 / XCL-2) (Thiomicrospira crunogena).